The chain runs to 466 residues: Arginine biosynthesis bifunctional protein ArgJ, mitochondrial (466 aa).

Substrate-binding residues include Thr194, Lys223, Thr234, Glu321, Asn461, and Thr466. Catalysis depends on Thr234, which acts as the Nucleophile.

It belongs to the ArgJ family. Heterodimer of an alpha and a beta chain. The alpha and beta chains are autoproteolytically processed from a single precursor protein within the mitochondrion.

It localises to the mitochondrion matrix. The enzyme catalyses N(2)-acetyl-L-ornithine + L-glutamate = N-acetyl-L-glutamate + L-ornithine. The catalysed reaction is L-glutamate + acetyl-CoA = N-acetyl-L-glutamate + CoA + H(+). Its pathway is amino-acid biosynthesis; L-arginine biosynthesis; L-ornithine and N-acetyl-L-glutamate from L-glutamate and N(2)-acetyl-L-ornithine (cyclic): step 1/1. It participates in amino-acid biosynthesis; L-arginine biosynthesis; N(2)-acetyl-L-ornithine from L-glutamate: step 1/4. Its function is as follows. Catalyzes two activities which are involved in the cyclic version of arginine biosynthesis: the synthesis of acetylglutamate from glutamate and acetyl-CoA, and of ornithine by transacetylation between acetylornithine and glutamate. In Aspergillus fumigatus (strain ATCC MYA-4609 / CBS 101355 / FGSC A1100 / Af293) (Neosartorya fumigata), this protein is Arginine biosynthesis bifunctional protein ArgJ, mitochondrial.